The primary structure comprises 506 residues: Aminoaldehyde dehydrogenase 1b (506 aa).

Residue Asp102 coordinates Na(+). NAD(+)-binding positions include 162 to 164 (TPW) and 188 to 191 (KPSE). Leu192 contributes to the Na(+) binding site. NAD(+) contacts are provided by residues 242–245 (SFET) and Glu263. The active-site Proton acceptor is Glu263. The Nucleophile role is filled by Cys297. Glu396 and Trp462 together coordinate NAD(+).

It belongs to the aldehyde dehydrogenase family.

The enzyme catalyses 4-aminobutanal + NAD(+) + H2O = 4-aminobutanoate + NADH + 2 H(+). The catalysed reaction is 3-aminopropanal + NAD(+) + H2O = beta-alanine + NADH + 2 H(+). It carries out the reaction 4-(trimethylamino)butanal + NAD(+) + H2O = 4-(trimethylamino)butanoate + NADH + 2 H(+). It catalyses the reaction 4-guanidinobutanal + NAD(+) + H2O = 4-guanidinobutanoate + NADH + 2 H(+). The enzyme catalyses betaine aldehyde + NAD(+) + H2O = glycine betaine + NADH + 2 H(+). The protein operates within amine and polyamine biosynthesis; betaine biosynthesis via choline pathway; betaine from betaine aldehyde: step 1/1. Functionally, dehydrogenase that catalyzes the oxidation of several aminoaldehydes. Metabolizes and detoxifies aldehyde products of polyamine degradation to non-toxic amino acids. Catalyzes the oxidation of 4-aminobutanal and 3-aminopropanal to 4-aminobutanoate and beta-alanine, respectively. Catalyzes the oxidation of 4-(trimethylamino)butanal and 4-guanidinobutanal to 4-trimethylammoniobutanoate and 4-guanidinobutanoate, respectively. Catalyzes the oxidation of betaine aldehyde to glycine betaine. This chain is Aminoaldehyde dehydrogenase 1b, found in Zea mays (Maize).